The chain runs to 214 residues: Outer-membrane lipoprotein LolB (214 aa).

Positions 1 to 25 (MNNLKRFTESIFSCIALSTLLFLGG) are cleaved as a signal peptide. Residue Cys26 is the site of N-palmitoyl cysteine attachment. A lipid anchor (S-diacylglycerol cysteine) is attached at Cys26.

The protein belongs to the LolB family. In terms of assembly, monomer.

The protein resides in the cell outer membrane. Its function is as follows. Plays a critical role in the incorporation of lipoproteins in the outer membrane after they are released by the LolA protein. This Shewanella putrefaciens (strain CN-32 / ATCC BAA-453) protein is Outer-membrane lipoprotein LolB.